The sequence spans 388 residues: Staphopain A (388 aa).

An N-terminal signal peptide occupies residues 1–25; it reads MKRNFPKLIALSLIFSLSITPIANA. Positions 26–214 are excised as a propeptide; it reads ESNSNIKAKD…TSQFKSNNYT (189 aa). Residues Cys238, His334, and Asn355 contribute to the active site.

It belongs to the peptidase C47 family. As to quaternary structure, in the cytoplasm, prematurely activated/folded ScpA forms a stable non-covalent complex with ScpB. Cleavage leads to the activation of ScpA probably by an auto-catalytic manner.

It localises to the secreted. The enzyme catalyses Broad endopeptidase action on proteins including elastin, but rather limited hydrolysis of small-molecule substrates. Assays are conveniently made with hemoglobin, casein or Z-Phe-Arg-NHMec as substrate.. With respect to regulation, prematurely activated/folded staphopain A is inhibited by staphostatin A (ScpB), which is probably required to protect staphylococcal cytoplasmic proteins from degradation by ScpA. Also inactivated by heavy metal ions such as Hg(2+) or Ag(+), iodoacetamide, E-64 and human plasma. In terms of biological role, cysteine protease that plays an important role in the inhibition of host innate immune response. Cleaves host elastins found in connective tissues, pulmonary surfactant protein A in the lungs, and the chemokine receptor CXCR2 on leukocytes. Proteolytic cleavage of surfactant protein A impairs bacterial phagocytosis by neutrophils while CXCR2 degradation blocks neutrophil activation and chemotaxis. Additionally, promotes vascular leakage by activating the plasma kallikerin/kinin system, resulting in hypotension. The polypeptide is Staphopain A (sspP) (Staphylococcus aureus).